The following is a 139-amino-acid chain: Exodeoxyribonuclease 7 small subunit (139 aa).

2 disordered regions span residues 1–26 (MAKK…LGDF) and 82–139 (DAEG…EDDE). Residues 130–139 (ADLDSAEDDE) show a composition bias toward acidic residues.

The protein belongs to the XseB family. As to quaternary structure, heterooligomer composed of large and small subunits.

The protein localises to the cytoplasm. It catalyses the reaction Exonucleolytic cleavage in either 5'- to 3'- or 3'- to 5'-direction to yield nucleoside 5'-phosphates.. Functionally, bidirectionally degrades single-stranded DNA into large acid-insoluble oligonucleotides, which are then degraded further into small acid-soluble oligonucleotides. The sequence is that of Exodeoxyribonuclease 7 small subunit from Rhodopirellula baltica (strain DSM 10527 / NCIMB 13988 / SH1).